A 325-amino-acid chain; its full sequence is RepFIB replication protein A (325 aa).

Residues 279-298 (APNDESKENPLPPSPAEKVS) are disordered.

Belongs to the initiator RepB protein family.

Its function is as follows. This protein is essential for plasmid replication; it is involved in copy control functions. In vitro, binds to the DNA repeat units, BCDD'D'', EFG and HIJ. This chain is RepFIB replication protein A (repB), found in Escherichia coli (strain K12).